The chain runs to 253 residues: Sulfate transporter CysZ (253 aa).

4 helical membrane-spanning segments follow: residues 31–51, 75–95, 151–171, and 222–242; these read FVILPLLVNILLMGGAFWWLF, LLWPIAVISVLLVFGYFFSTI, IVLLILYFIPGVGQTVAPVLW, and IPVLNLVIMPVAVCGATAMWV.

Belongs to the CysZ family.

It is found in the cell inner membrane. Functionally, high affinity, high specificity proton-dependent sulfate transporter, which mediates sulfate uptake. Provides the sulfur source for the cysteine synthesis pathway. This is Sulfate transporter CysZ from Citrobacter koseri (strain ATCC BAA-895 / CDC 4225-83 / SGSC4696).